We begin with the raw amino-acid sequence, 114 residues long: Evasin-1 (114 aa).

The signal sequence occupies residues 1-20; it reads MTFKACIAIITALCAMQVIC. Intrachain disulfides connect Cys32-Cys53, Cys49-Cys90, Cys66-Cys95, and Cys85-Cys104. N-linked (GlcNAc...) asparagine glycans are attached at residues Asn39, Asn54, and Asn62.

This sequence belongs to the evasin C8 family. In terms of assembly, monomer.

The protein resides in the secreted. Salivary chemokine-binding protein which shows chemokine neutralizing activity and binds to host chemokines CCL3, CCL4 and CCL18. Binds to CCL3 with 1:1 stoichiometry. The protein is Evasin-1 of Rhipicephalus sanguineus (Brown dog tick).